The chain runs to 274 residues: Dermonecrotic toxin SdSicTox-betaIIB2ii (274 aa).

H5 is an active-site residue. E25 and D27 together coordinate Mg(2+). The Nucleophile role is filled by H41. 2 disulfide bridges follow: C45-C51 and C47-C190. D85 serves as a coordination point for Mg(2+).

It belongs to the arthropod phospholipase D family. Class II subfamily. The cofactor is Mg(2+). Expressed by the venom gland.

It is found in the secreted. It carries out the reaction an N-(acyl)-sphingosylphosphocholine = an N-(acyl)-sphingosyl-1,3-cyclic phosphate + choline. The catalysed reaction is an N-(acyl)-sphingosylphosphoethanolamine = an N-(acyl)-sphingosyl-1,3-cyclic phosphate + ethanolamine. It catalyses the reaction a 1-acyl-sn-glycero-3-phosphocholine = a 1-acyl-sn-glycero-2,3-cyclic phosphate + choline. The enzyme catalyses a 1-acyl-sn-glycero-3-phosphoethanolamine = a 1-acyl-sn-glycero-2,3-cyclic phosphate + ethanolamine. Its function is as follows. Dermonecrotic toxins cleave the phosphodiester linkage between the phosphate and headgroup of certain phospholipids (sphingolipid and lysolipid substrates), forming an alcohol (often choline) and a cyclic phosphate. This toxin acts on sphingomyelin (SM). It may also act on ceramide phosphoethanolamine (CPE), lysophosphatidylcholine (LPC) and lysophosphatidylethanolamine (LPE), but not on lysophosphatidylserine (LPS), and lysophosphatidylglycerol (LPG). It acts by transphosphatidylation, releasing exclusively cyclic phosphate products as second products. Induces dermonecrosis, hemolysis, increased vascular permeability, edema, inflammatory response, and platelet aggregation. The sequence is that of Dermonecrotic toxin SdSicTox-betaIIB2ii from Sicarius cf. damarensis (strain GJB-2008) (Six-eyed sand spider).